Here is a 156-residue protein sequence, read N- to C-terminus: MAAPALPVSLTPALSDRDAIADALYRGVIAFDTADEVLFKSALTEDAVLVLNGTVMEGYDAIYSGCYVNIAKMDTNHFLTNMRVNITEESKAQVSCSALSQHYRGGEGMKPGSDFLLAGGLYAVELVKDAGDGLWKIKHWTLKTTWGQGDWAVFGK.

It participates in secondary metabolite biosynthesis. Part of the tra gene cluster that produces terrestric acid. The clavatol biosynthesis cluster cla and the terrestric acid cluster tra are both involved in the production of peniphenones and penilactones. The non-reducing PKS claF is responsible for the formation of clavatol from successive condensations of 3 malonyl-CoA units, presumably with a simple acetyl-CoA starter unit, and 2 methylation steps. The esterase claE probably collaborates with claF by catalyzing the hydrolysis of ACP-bound acyl intermediates to free the ACP from stalled intermediates. The clavatol oxidase claD then converts clavatol to hydroxyclavatol. Spontaneous dehydration of hydroxyclavatol leads to the accumulation of the highly active ortho-quinone methide. On the other hand, the PKS-NRPS hybrid traA is involved in the formation of crustosic acid, with the help of traB and traD. The polyketide synthase module (PKS) of traA is responsible for the synthesis of the polyketide backbone via the condensation of an acetyl-CoA starter unit with 3 malonyl-CoA units. The downstream nonribosomal peptide synthetase (NRPS) module then amidates the carboxyl end of the polyketide with L-malic acid. Because traA lacks a designated enoylreductase (ER) domain, the required activity is provided the enoyl reductase traG. Crustosic acid undergoes decarboxylation and isomerization to the terrestric acid, catalyzed by the 2-oxoglutarate-dependent dioxygenase traH. Both acids are further converted to the 2 gamma-butyrolactones (R)-5-methyltetronic acid and (S)-5-carboxylmethyltetronic acid, with involvement of the cytochrome P450 monooxygenase claJ. Spontaneous addition of the methide to these gamma-butyrolactones leads to peniphenone D and penilactone D, which undergo again stereospecific attacking by methide to give penilactones A and B. TraE seems not to be involved in the biosynthesis of peniphenones and penilactones in the conditions used to study its function. The chain is Terrestric acid biosynthesis cluster protein E from Penicillium crustosum (Blue mold fungus).